Reading from the N-terminus, the 461-residue chain is UDP-glycosyltransferase 82A1 (461 aa).

UDP-alpha-D-glucose-binding positions include Ser292, 349–351 (APQ), 366–374 (HCGWNSTME), and 388–391 (AGDQ).

The protein belongs to the UDP-glycosyltransferase family.

The protein is UDP-glycosyltransferase 82A1 (UGT82A1) of Arabidopsis thaliana (Mouse-ear cress).